The following is a 24-amino-acid chain: Lectin (24 aa).

Polar residues predominate over residues 1–18 (AEEQSFSSTKFSTDQPNL). The segment at 1-24 (AEEQSFSSTKFSTDQPNLILQGDA) is disordered.

This sequence belongs to the leguminous lectin family. As to quaternary structure, homotetramer.

This chain is Lectin, found in Crotalaria juncea (Sunn hemp).